A 197-amino-acid chain; its full sequence is MKKIIVATKNKGKAKEFKEFFASFDIEAISLLDLPESIPDIEETGTTFEENAALKAEQISERFNTAVIADDSGLLIDALDGRPGLYSARYAGEPTNDQANIEKVLKEMQDVPDNDRSARFICVLAIAQPGKETNFCTGYCEGHIHSKQKGDHGFGYDPIFIPKKYDVTMAELDPAKKNQISHRKNAIDQLEKWLHTI.

Residue 8-13 (TKNKGK) participates in substrate binding. The Mg(2+) site is built by Glu-42 and Asp-71. Asp-71 (proton acceptor) is an active-site residue. Substrate contacts are provided by residues Ser-72, 154-157 (FGYD), Lys-177, and 182-183 (HR).

The protein belongs to the HAM1 NTPase family. In terms of assembly, homodimer. It depends on Mg(2+) as a cofactor.

It carries out the reaction XTP + H2O = XMP + diphosphate + H(+). The catalysed reaction is dITP + H2O = dIMP + diphosphate + H(+). It catalyses the reaction ITP + H2O = IMP + diphosphate + H(+). Its function is as follows. Pyrophosphatase that catalyzes the hydrolysis of nucleoside triphosphates to their monophosphate derivatives, with a high preference for the non-canonical purine nucleotides XTP (xanthosine triphosphate), dITP (deoxyinosine triphosphate) and ITP. Seems to function as a house-cleaning enzyme that removes non-canonical purine nucleotides from the nucleotide pool, thus preventing their incorporation into DNA/RNA and avoiding chromosomal lesions. The protein is dITP/XTP pyrophosphatase of Oceanobacillus iheyensis (strain DSM 14371 / CIP 107618 / JCM 11309 / KCTC 3954 / HTE831).